A 148-amino-acid polypeptide reads, in one-letter code: Transcriptional regulator MraZ (148 aa).

SpoVT-AbrB domains follow at residues 5–53 and 82–125; these read ETAI…AEKE and SAVL…SEQA.

It belongs to the MraZ family. In terms of assembly, forms oligomers.

The protein localises to the cytoplasm. The protein resides in the nucleoid. The polypeptide is Transcriptional regulator MraZ (Xanthomonas oryzae pv. oryzae (strain MAFF 311018)).